We begin with the raw amino-acid sequence, 591 residues long: Aspartate--tRNA ligase (591 aa).

Glu176 contributes to the L-aspartate binding site. The segment at 200-203 is aspartate; it reads QILK. L-aspartate is bound at residue Arg222. ATP-binding positions include 222 to 224 and Gln231; that span reads RDE. His450 contributes to the L-aspartate binding site. Position 484 (Glu484) interacts with ATP. Arg491 is a binding site for L-aspartate. 536–539 contributes to the ATP binding site; it reads GLDR.

The protein belongs to the class-II aminoacyl-tRNA synthetase family. Type 1 subfamily. In terms of assembly, homodimer.

Its subcellular location is the cytoplasm. It catalyses the reaction tRNA(Asp) + L-aspartate + ATP = L-aspartyl-tRNA(Asp) + AMP + diphosphate. In terms of biological role, catalyzes the attachment of L-aspartate to tRNA(Asp) in a two-step reaction: L-aspartate is first activated by ATP to form Asp-AMP and then transferred to the acceptor end of tRNA(Asp). The protein is Aspartate--tRNA ligase of Listeria monocytogenes serovar 1/2a (strain ATCC BAA-679 / EGD-e).